Consider the following 429-residue polypeptide: MAMRIRIDLPQDEIPAQWYNILPDLPEELPPPQDPTGKSLELLKEVLPSKVLELEFAKERYVKIPDEVLERYLQVGRPTPIIRAKRLEEYLGNNIKIYLKMESYTYTGSHKINSALAHVYYAKLDNAKFVTTETGAGQWGSSVALASALFRMKAHIFMVRTSYYAKPYRKYMMQMYGAEVHPSPSDLTEFGRQLLAKDSNHPGSLGIAISDAVEYAHKNGGKYVVGSVVNSDIMFKTIAGMEAKKQMELIGEDPDYIIGVVGGGSNYAALAYPFLGDELRSGKVRRKYIASGSSEVPKMTKGVYKYDYPDTAKLLPMLKMYTIGSDFVPPPVYAGGLRYHGVAPTLSLLISKGIVQARDYSQEESFKWAKLFSELEGYIPAPETSHALPILAEIAEEAKKSGERKTVLVSFSGHGLLDLGNYASVLFKE.

Lys111 bears the N6-(pyridoxal phosphate)lysine mark.

The protein belongs to the TrpB family. In terms of assembly, tetramer of two alpha and two beta chains. Pyridoxal 5'-phosphate serves as cofactor.

The catalysed reaction is (1S,2R)-1-C-(indol-3-yl)glycerol 3-phosphate + L-serine = D-glyceraldehyde 3-phosphate + L-tryptophan + H2O. It functions in the pathway amino-acid biosynthesis; L-tryptophan biosynthesis; L-tryptophan from chorismate: step 5/5. The beta subunit is responsible for the synthesis of L-tryptophan from indole and L-serine. In Saccharolobus solfataricus (strain ATCC 35092 / DSM 1617 / JCM 11322 / P2) (Sulfolobus solfataricus), this protein is Tryptophan synthase beta chain 2 (trpB2).